Consider the following 926-residue polypeptide: Staphylococcal nuclease domain-containing protein 1 (926 aa).

A compositionally biased stretch (low complexity) spans 1 to 17; sequence MATAANTATAAGAAKDA. A disordered region spans residues 1-24; the sequence is MATAANTATAAGAAKDAPPAPTKS. TNase-like domains lie at 23 to 167, 195 to 333, 346 to 505, and 535 to 674; these read KSLS…KWSP, NPVK…QWQD, KDFS…LHAK, and LRTE…IWTN. The Tudor domain maps to 749–807; it reads TPKRGDLVAAQFTLDNQWYRAKVERVQGSNATVLYIDYGNKETLPTNRLAALPPAFSSE. The segment at 760–788 is involved in dimethylarginine binding; sequence FTLDNQWYRAKVERVQGSNATVLYIDYGN.

In terms of assembly, associates with the RNA-induced silencing complex (RISC). Interacts with the RISC components AGO2, Fmr1 and vig. Interacts with piwi. Expressed in adult ovaries and testis (at protein level).

The protein localises to the cytoplasm. It is found in the nucleus. It carries out the reaction Endonucleolytic cleavage to nucleoside 3'-phosphates and 3'-phosphooligonucleotide end-products.. Its function is as follows. Endonuclease which shows activity towards both DNA and RNA substrates. Has a role in translation regulation throught its association with the with the RNA-induced silencing complex (RISC). Plays a role in spermatogenesis probably by negatively regulating piwi expression in the germline. Together with piwi, might be involved in transposon repression in the germline. In Drosophila melanogaster (Fruit fly), this protein is Staphylococcal nuclease domain-containing protein 1.